Consider the following 65-residue polypeptide: Large ribosomal subunit protein bL35 (65 aa).

It belongs to the bacterial ribosomal protein bL35 family.

This Parasynechococcus marenigrum (strain WH8102) protein is Large ribosomal subunit protein bL35.